Reading from the N-terminus, the 356-residue chain is Tyrosine recombinase XerS (356 aa).

Positions 16–121 (LMPWYVLEYY…ALSSLYKYLT (106 aa)) constitute a Core-binding (CB) domain. One can recognise a Tyr recombinase domain in the interval 169-354 (GFLTYIDQEH…VNDEQKNALD (186 aa)). Catalysis depends on residues Arg210, Lys234, His306, Arg309, and His332. Tyr341 serves as the catalytic O-(3'-phospho-DNA)-tyrosine intermediate.

This sequence belongs to the 'phage' integrase family. XerS subfamily.

It is found in the cytoplasm. FtsK is required for recombination. Site-specific tyrosine recombinase, which acts by catalyzing the cutting and rejoining of the recombining DNA molecules. Essential to convert dimers of the bacterial chromosome into monomers to permit their segregation at cell division. The chain is Tyrosine recombinase XerS from Streptococcus pneumoniae serotype 19F (strain G54).